Here is a 513-residue protein sequence, read N- to C-terminus: ATP synthase subunit alpha (513 aa).

169–176 (GDRQTGKT) is a binding site for ATP.

Belongs to the ATPase alpha/beta chains family. In terms of assembly, F-type ATPases have 2 components, CF(1) - the catalytic core - and CF(0) - the membrane proton channel. CF(1) has five subunits: alpha(3), beta(3), gamma(1), delta(1), epsilon(1). CF(0) has three main subunits: a(1), b(2) and c(9-12). The alpha and beta chains form an alternating ring which encloses part of the gamma chain. CF(1) is attached to CF(0) by a central stalk formed by the gamma and epsilon chains, while a peripheral stalk is formed by the delta and b chains.

It is found in the cell inner membrane. The enzyme catalyses ATP + H2O + 4 H(+)(in) = ADP + phosphate + 5 H(+)(out). Functionally, produces ATP from ADP in the presence of a proton gradient across the membrane. The alpha chain is a regulatory subunit. The polypeptide is ATP synthase subunit alpha (Salmonella arizonae (strain ATCC BAA-731 / CDC346-86 / RSK2980)).